Reading from the N-terminus, the 320-residue chain is Pseudouridine-5'-phosphate glycosidase (320 aa).

The active-site Proton donor is glutamate 25. Residues lysine 85 and valine 105 each contribute to the substrate site. Mn(2+) is bound at residue aspartate 137. Position 139-141 (139-141) interacts with substrate; it reads SAD. Lysine 158 acts as the Nucleophile in catalysis.

It belongs to the pseudouridine-5'-phosphate glycosidase family. Homotrimer. Mn(2+) is required as a cofactor.

The enzyme catalyses D-ribose 5-phosphate + uracil = psi-UMP + H2O. Its function is as follows. Catalyzes the reversible cleavage of pseudouridine 5'-phosphate (PsiMP) to ribose 5-phosphate and uracil. Functions biologically in the cleavage direction, as part of a pseudouridine degradation pathway. The polypeptide is Pseudouridine-5'-phosphate glycosidase (Rhodospirillum centenum (strain ATCC 51521 / SW)).